We begin with the raw amino-acid sequence, 532 residues long: Light-independent protochlorophyllide reductase subunit B (532 aa).

Asp36 is a [4Fe-4S] cluster binding site. Catalysis depends on Asp292, which acts as the Proton donor. 428–429 is a substrate binding site; the sequence is GL. Positions 445–486 are disordered; sequence EEEEPESISNGHAAAAGSEGGVPDSGEAGDAGDTDGMPWSPD.

It belongs to the ChlB/BchB/BchZ family. Protochlorophyllide reductase is composed of three subunits; BchL, BchN and BchB. Forms a heterotetramer of two BchB and two BchN subunits. The cofactor is [4Fe-4S] cluster.

It carries out the reaction chlorophyllide a + oxidized 2[4Fe-4S]-[ferredoxin] + 2 ADP + 2 phosphate = protochlorophyllide a + reduced 2[4Fe-4S]-[ferredoxin] + 2 ATP + 2 H2O. It functions in the pathway porphyrin-containing compound metabolism; bacteriochlorophyll biosynthesis (light-independent). Its function is as follows. Component of the dark-operative protochlorophyllide reductase (DPOR) that uses Mg-ATP and reduced ferredoxin to reduce ring D of protochlorophyllide (Pchlide) to form chlorophyllide a (Chlide). This reaction is light-independent. The NB-protein (BchN-BchB) is the catalytic component of the complex. This is Light-independent protochlorophyllide reductase subunit B from Chlorobium phaeobacteroides (strain BS1).